Here is a 345-residue protein sequence, read N- to C-terminus: Ferrochelatase (345 aa).

Fe cation-binding residues include His-215 and Glu-296.

Belongs to the ferrochelatase family.

It localises to the cytoplasm. The catalysed reaction is heme b + 2 H(+) = protoporphyrin IX + Fe(2+). It participates in porphyrin-containing compound metabolism; protoheme biosynthesis; protoheme from protoporphyrin-IX: step 1/1. Functionally, catalyzes the ferrous insertion into protoporphyrin IX. The polypeptide is Ferrochelatase (Rhodopseudomonas palustris (strain ATCC BAA-98 / CGA009)).